The chain runs to 207 residues: Probable GTP-binding protein EngB (207 aa).

An EngB-type G domain is found at Gly24–Leu199. Residues Gly32 to Ser39, Gly59 to Gln63, Asp77 to Gly80, Thr144 to Asp147, and Tyr178 to Gly180 each bind GTP. Ser39 and Thr61 together coordinate Mg(2+).

The protein belongs to the TRAFAC class TrmE-Era-EngA-EngB-Septin-like GTPase superfamily. EngB GTPase family. Mg(2+) serves as cofactor.

Functionally, necessary for normal cell division and for the maintenance of normal septation. The protein is Probable GTP-binding protein EngB of Xanthomonas campestris pv. campestris (strain 8004).